A 466-amino-acid chain; its full sequence is MEKWWFNSMLSKEELGHRCGLSKSMDSLDPIDNINSNENMILNFTEKSIHSWSNGSSYSNLDLLFIIGDIPNLISDETFLIRDRKGETYSVYFDIENKIVEIDNYHSFSNYWNSSYGTGSKSNDTHYDLYMYDTKSSLNNHINGCIDSYLHSQMRLDNYVLRDSDHYGDNYIFDDIKTTTKTNGRDKNLEVTKKYRNLWIQCENCYELNYKKLLKSKMRICDECGYHLKMSSSERIELSIDPGTWEPMDEDMVSTDPIEFHSQEEPYKDRINSYQKETGLTDAVQTGIGQLNGIPVAIGVMDFQFMGGSMGSVVGEKITRLAEYATNQNLPLIIVCASGGARMQEGSLSLMQMAKISSALFDYQSNKKLFYVSILTSPTTGGVTASFGMLGDIIISEPSAYIAFAGKRVIEETLNTTVPEGSQEAEYLFDKGLFDPIVPRNPLKGVLSELFRLHAFFPLNQNSIGQ.

One can recognise a CoA carboxyltransferase N-terminal domain in the interval 198–466 (LWIQCENCYE…FPLNQNSIGQ (269 aa)). Residues Cys-202, Cys-205, Cys-221, and Cys-224 each coordinate Zn(2+). The C4-type zinc-finger motif lies at 202–224 (CENCYELNYKKLLKSKMRICDEC).

It belongs to the AccD/PCCB family. In terms of assembly, acetyl-CoA carboxylase is a heterohexamer composed of biotin carboxyl carrier protein, biotin carboxylase and 2 subunits each of ACCase subunit alpha and ACCase plastid-coded subunit beta (accD). The cofactor is Zn(2+).

It localises to the plastid. The protein localises to the chloroplast stroma. The enzyme catalyses N(6)-carboxybiotinyl-L-lysyl-[protein] + acetyl-CoA = N(6)-biotinyl-L-lysyl-[protein] + malonyl-CoA. It functions in the pathway lipid metabolism; malonyl-CoA biosynthesis; malonyl-CoA from acetyl-CoA: step 1/1. Its function is as follows. Component of the acetyl coenzyme A carboxylase (ACC) complex. Biotin carboxylase (BC) catalyzes the carboxylation of biotin on its carrier protein (BCCP) and then the CO(2) group is transferred by the transcarboxylase to acetyl-CoA to form malonyl-CoA. This is Acetyl-coenzyme A carboxylase carboxyl transferase subunit beta, chloroplastic from Fagopyrum esculentum subsp. ancestrale (Wild buckwheat).